Here is a 95-residue protein sequence, read N- to C-terminus: RING finger protein Z (95 aa).

A lipid anchor (N-myristoyl glycine; by host) is attached at glycine 2. The segment at 38-74 (CKSCWFANRGLIACSDHYLCLNCLTRLRSQSQFCGIC) adopts an RING-type; atypical zinc-finger fold. Residues 88–91 (PSAP) carry the PTAP/PSAP motif motif.

This sequence belongs to the arenaviridae Z protein family. Interacts with protein NP; this interaction probably directs the encapsidated genome to budding sites. Interacts (via RING domain) with polymerase L; this interaction inhibits viral transcription and replication, Z partially blocks the product exit tunnel for the releasing nascent RNA product. Interacts with the glycoprotein complex; this interaction plays a role in virion budding. Interacts with host eIF4E; this interaction results in eIF4E reduced affinity for its substrate, the 5'-m7 G cap structure. Interacts (via late-budding domain) with host TSG101; this interaction is essential for budding and release of viral particles. Interacts with host RPLP0; this interaction may serve to load ribosome-like particles inside the virion. Interacts with host PML; this interaction induces PML bodies redistribution in the cytoplasm upon viral infection. Myristoylation is required for the role of RING finger protein Z in assembly and budding.

It is found in the virion. Its subcellular location is the host cytoplasm. The protein localises to the host perinuclear region. It localises to the host cell membrane. Plays a crucial role in virion assembly and budding. Expressed late in the virus life cycle, it acts as an inhibitor of viral transcription and RNA synthesis by interacting with the viral polymerase L. Presumably recruits the NP encapsidated genome to cellular membranes at budding sites via direct interaction with NP. Plays critical roles in the final steps of viral release by interacting with host TSG101, a member of the vacuolar protein-sorting pathway and using other cellular host proteins involved in vesicle formation pathway. The budding of the virus progeny occurs after association of protein Z with the viral glycoprotein complex SSP-GP1-GP2 at the cell periphery, step that requires myristoylation of protein Z. Also selectively represses protein production by associating with host eIF4E. In cell-based minigenome assay, has an inhibitory effect on the ribonucleoprotein machinery (vRNP), which is responsible for the replication and transcription of the viral genome. The protein is RING finger protein Z of Pirital mammarenavirus (isolate Rat/Venezuela/VAV-488/1995) (PIRV).